The primary structure comprises 141 residues: Large ribosomal subunit protein uL11c (141 aa).

This sequence belongs to the universal ribosomal protein uL11 family. In terms of assembly, part of the ribosomal stalk of the 50S ribosomal subunit. Interacts with L10 and the large rRNA to form the base of the stalk. L10 forms an elongated spine to which L12 dimers bind in a sequential fashion forming a multimeric L10(L12)X complex.

The protein localises to the plastid. It is found in the chloroplast. Functionally, forms part of the ribosomal stalk which helps the ribosome interact with GTP-bound translation factors. In Thalassiosira pseudonana (Marine diatom), this protein is Large ribosomal subunit protein uL11c.